The sequence spans 862 residues: Leucine--tRNA ligase (862 aa).

The 'HIGH' region motif lies at 42 to 52; the sequence is PYPSGRLHMGH. A 'KMSKS' region motif is present at residues 622 to 626; that stretch reads KMSKS. Lys625 provides a ligand contact to ATP.

This sequence belongs to the class-I aminoacyl-tRNA synthetase family.

It is found in the cytoplasm. It catalyses the reaction tRNA(Leu) + L-leucine + ATP = L-leucyl-tRNA(Leu) + AMP + diphosphate. This chain is Leucine--tRNA ligase, found in Vibrio campbellii (strain ATCC BAA-1116).